We begin with the raw amino-acid sequence, 363 residues long: Palmitoyltransferase ZDHHC9 (363 aa).

Over 1–35 (MSVMVVRKKVTRKWEKLPGRNTFCCDGRVMMARQK) the chain is Cytoplasmic. A helical membrane pass occupies residues 36 to 56 (GIFYLTLFLILGTCTLFFAFE). Residues 57-63 (CRYLAVQ) are Lumenal-facing. A helical transmembrane segment spans residues 64 to 84 (LSPAIPVFAAMLFLFSMATLL). Over 85-183 (RTSFSDPGVI…NCVGKRNYRY (99 aa)) the chain is Cytoplasmic. One can recognise a DHHC domain in the interval 139 to 189 (KYCYTCKIFRPPRASHCSICDNCVERFDHHCPWVGNCVGKRNYRYFYLFIL). Catalysis depends on cysteine 169, which acts as the S-palmitoyl cysteine intermediate. Residues 184–204 (FYLFILSLSLLTIYVFAFNIV) form a helical membrane-spanning segment. Over 205–228 (YVALKSLKIGFLETLKETPGTVLE) the chain is Lumenal. A helical transmembrane segment spans residues 229–249 (VLICFFTLWSVVGLTGFHTFL). The Cytoplasmic portion of the chain corresponds to 250 to 363 (VALNQTTNED…PPQEVTEAEK (114 aa)). The disordered stretch occupies residues 303-363 (PLEESGSRPP…PPQEVTEAEK (61 aa)). Residues 310–322 (RPPSTQEASTSLL) are compositionally biased toward polar residues. Positions 345–355 (EMPPPEPPEPP) are enriched in pro residues.

It belongs to the DHHC palmitoyltransferase family. ERF2/ZDHHC9 subfamily. As to quaternary structure, interacts with GOLGA7.

Its subcellular location is the endoplasmic reticulum membrane. The protein resides in the golgi apparatus membrane. The enzyme catalyses L-cysteinyl-[protein] + hexadecanoyl-CoA = S-hexadecanoyl-L-cysteinyl-[protein] + CoA. Functionally, palmitoyltransferase that catalyzes the addition of palmitate onto various protein substrates, such as ADRB2, GSDMD, HRAS, NRAS and CGAS. The ZDHHC9-GOLGA7 complex is a palmitoyltransferase specific for HRAS and NRAS. May have a palmitoyltransferase activity toward the beta-2 adrenergic receptor/ADRB2 and therefore regulate G protein-coupled receptor signaling. Acts as a regulator of innate immunity by catalyzing palmitoylation of CGAS, thereby promoting CGAS homodimerization and cyclic GMP-AMP synthase activity. Activates pyroptosis by catalyzing palmitoylation of gasdermin-D (GSDMD), thereby promoting membrane translocation and pore formation of GSDMD. This Bos taurus (Bovine) protein is Palmitoyltransferase ZDHHC9 (ZDHHC9).